A 135-amino-acid chain; its full sequence is Retinol-binding protein 5 (135 aa).

It belongs to the calycin superfamily. Fatty-acid binding protein (FABP) family.

It is found in the cytoplasm. Functionally, intracellular transport of retinol. The chain is Retinol-binding protein 5 (RBP5) from Pongo abelii (Sumatran orangutan).